The chain runs to 92 residues: Small ribosomal subunit protein uS19 (92 aa).

It belongs to the universal ribosomal protein uS19 family.

Its function is as follows. Protein S19 forms a complex with S13 that binds strongly to the 16S ribosomal RNA. The protein is Small ribosomal subunit protein uS19 of Magnetococcus marinus (strain ATCC BAA-1437 / JCM 17883 / MC-1).